Here is a 327-residue protein sequence, read N- to C-terminus: Cobalamin biosynthesis protein CobD (327 aa).

A run of 4 helical transmembrane segments spans residues 61 to 78, 80 to 102, 160 to 182, and 300 to 322; these read MWLT…GLVI, SILP…ILLA, GIVA…YKLI, and AALV…ASLV.

The protein belongs to the CobD/CbiB family.

The protein resides in the cell membrane. The protein operates within cofactor biosynthesis; adenosylcobalamin biosynthesis. Its function is as follows. Converts cobyric acid to cobinamide by the addition of aminopropanol on the F carboxylic group. This is Cobalamin biosynthesis protein CobD from Brucella suis biovar 1 (strain 1330).